The chain runs to 504 residues: Ammonium transporter 1 member 4 (504 aa).

12 consecutive transmembrane segments (helical) span residues 12 to 32 (LIPLLSGGANATAAAAAAEYI), 55 to 75 (LLFSAYLVFAMQLGFAMLCAG), 90 to 110 (VIDAAAGGLFYYLFGFAFAFG), 136 to 156 (YFLYQWTFAIAAAGITSGSIA), 161 to 181 (FVAYLIYSSFLTGLVYPIVSH), 207 to 227 (FAGSGVVHMVGGIAGLWGALI), 251 to 271 (LVVLGTFLLWFGWYGFNPGSF), 292 to 314 (AVGRTAVTTTLAGCTAALTTLFG), 318 to 338 (IDGYWNVTDVCNGLLGGFAAI), 344 to 364 (VVEPWAALVCGFVAAWVLMGC), 377 to 397 (LEAAQLHGGCGAWGIIFTGLF), and 430 to 450 (VVQILVITGWVSVTMGTLFFI). A Phosphothreonine modification is found at T471.

It belongs to the ammonia transporter channel (TC 1.A.11.2) family. Specifically expressed in pollen grains and tubes.

The protein localises to the cell membrane. High affinity ammonium transporter in the plasma membrane. The sequence is that of Ammonium transporter 1 member 4 (AMT1-4) from Arabidopsis thaliana (Mouse-ear cress).